The sequence spans 283 residues: Thymidylate synthase (283 aa).

DUMP is bound by residues arginine 31 and 145–146 (RR). Catalysis depends on cysteine 165, which acts as the Nucleophile. DUMP-binding positions include 185–188 (RSAD), asparagine 196, and 226–228 (HIY). Aspartate 188 contributes to the (6R)-5,10-methylene-5,6,7,8-tetrahydrofolate binding site. Serine 282 contributes to the (6R)-5,10-methylene-5,6,7,8-tetrahydrofolate binding site.

Belongs to the thymidylate synthase family. Bacterial-type ThyA subfamily. As to quaternary structure, homodimer.

The protein resides in the cytoplasm. It catalyses the reaction dUMP + (6R)-5,10-methylene-5,6,7,8-tetrahydrofolate = 7,8-dihydrofolate + dTMP. It functions in the pathway pyrimidine metabolism; dTTP biosynthesis. In terms of biological role, catalyzes the reductive methylation of 2'-deoxyuridine-5'-monophosphate (dUMP) to 2'-deoxythymidine-5'-monophosphate (dTMP) while utilizing 5,10-methylenetetrahydrofolate (mTHF) as the methyl donor and reductant in the reaction, yielding dihydrofolate (DHF) as a by-product. This enzymatic reaction provides an intracellular de novo source of dTMP, an essential precursor for DNA biosynthesis. The polypeptide is Thymidylate synthase (Symbiobacterium thermophilum (strain DSM 24528 / JCM 14929 / IAM 14863 / T)).